Reading from the N-terminus, the 510-residue chain is Histone deacetylase 3 (510 aa).

A histone deacetylase region spans residues 24-338 (RRVCYFYDPE…WCYETGVALG (315 aa)). Residue H158 is the Proton donor/acceptor of the active site. D193, H195, and D281 together coordinate Zn(2+). Residues 394 to 510 (PSVQFQERIP…ARNEPGSSPK (117 aa)) form a disordered region. 2 stretches are compositionally biased toward basic and acidic residues: residues 418–434 (DERHDPDSDMVLDDHKP) and 448–472 (VKREITETETKDQHGKRLTTEHKGP). Positions 485 to 503 (APTADANAVAVNAPGNARN) are enriched in low complexity.

This sequence belongs to the histone deacetylase family. HD Type 1 subfamily. Zn(2+) is required as a cofactor. As to expression, expressed in roots.

Its subcellular location is the nucleus. The enzyme catalyses N(6)-acetyl-L-lysyl-[histone] + H2O = L-lysyl-[histone] + acetate. Responsible for the deacetylation of lysine residues on the N-terminal part of the core histones (H2A, H2B, H3 and H4). Histone deacetylation gives a tag for epigenetic repression and plays an important role in transcriptional regulation, cell cycle progression and developmental events. Histone deacetylases act via the formation of large multiprotein complexes. The polypeptide is Histone deacetylase 3 (Oryza sativa subsp. japonica (Rice)).